The chain runs to 196 residues: RNA pyrophosphohydrolase (196 aa).

The 144-residue stretch at 6-149 (GYRPNVGIVI…KRDVYRKVMK (144 aa)) folds into the Nudix hydrolase domain. Residues 38-59 (GGINDNESAEQAMYRELHEEVG) carry the Nudix box motif.

The protein belongs to the Nudix hydrolase family. RppH subfamily. Requires a divalent metal cation as cofactor.

Functionally, accelerates the degradation of transcripts by removing pyrophosphate from the 5'-end of triphosphorylated RNA, leading to a more labile monophosphorylated state that can stimulate subsequent ribonuclease cleavage. This chain is RNA pyrophosphohydrolase, found in Haemophilus influenzae (strain PittEE).